The chain runs to 304 residues: MAEASAAGADSGAAVAAHRFFCHFCKGEVSPKLPEYICPRCESGFIEEVTDDSSFLGGGGSRIDNTTTTHFAELWGHLDHTMFFQDFRPFLSSSPLDQDNRANERGHQTHTDFWGARPPRLPLGRRYRSRGSSRPDRSPAIEGILQHIFAGFFANSAIPGSPHPFSWSGMLHSNPGDYAWGQTGLDAIVTQLLGQLENTGPPPADKEKITSLPTVTVTQEQVDMGLECPVCKEDYTVEEEVRQLPCNHFFHSSCIVPWLELHDTCPVCRKSLNGEDSTRQSQSTEASASNRFSNDSQLHDRWTF.

The residue at position 2 (Ala-2) is an N-acetylalanine. The interval 95–138 (PLDQDNRANERGHQTHTDFWGARPPRLPLGRRYRSRGSSRPDRS) is disordered. A compositionally biased stretch (basic and acidic residues) spans 98-110 (QDNRANERGHQTH). Phosphoserine; by PKB/AKT1 occurs at positions 132 and 133. Residues 228–269 (CPVCKEDYTVEEEVRQLPCNHFFHSSCIVPWLELHDTCPVCR) form an RING-type zinc finger. The disordered stretch occupies residues 272 to 304 (LNGEDSTRQSQSTEASASNRFSNDSQLHDRWTF). Over residues 279 to 296 (RQSQSTEASASNRFSNDS) the composition is skewed to polar residues.

Interacts with RAB7A. Interacts with EGFR and FLT3. Interacts with BST2. Interacts with STX17. Interacts with YWHAE. In terms of processing, phosphorylated by AKT1, allowing association with the 14-3-3 chaperones that facilitates associating with TLRs. RING-type zinc finger-dependent and E2-dependent autoubiquitination. Post-translationally, deubiquitinated by USP9X; antogonizing its autoubiquitination and subsequent proteasomal degradation. Expressed at extremely low levels in normal breast, prostate, lung, colon. Higher levels of expression are detected in heart, skeletal muscle, testis as well as in breast and prostate cancer cells.

It localises to the cytoplasm. Its subcellular location is the nucleus. The protein localises to the endoplasmic reticulum. The protein resides in the golgi apparatus. It carries out the reaction S-ubiquitinyl-[E2 ubiquitin-conjugating enzyme]-L-cysteine + [acceptor protein]-L-lysine = [E2 ubiquitin-conjugating enzyme]-L-cysteine + N(6)-ubiquitinyl-[acceptor protein]-L-lysine.. The protein operates within protein modification; protein ubiquitination. Its function is as follows. E3 ubiquitin-protein ligase that catalyzes the 'Lys-48'- and/or 'Lys-63'-linked polyubiquitination of various substrates and thereby plays a role in a number of signaling pathways including autophagy, innate immunity, cell proliferation and cell death. Plays a role in the endosomal trafficking and degradation of membrane receptors including EGFR, FLT3, MET and CXCR4 through their polyubiquitination. Participates together with BST2 in antiviral immunity by facilitating the internalization of HIV-1 virions into intracellular vesicles leading to their lysosomal degradation. Also possesses an antiviral activity independently of BST2 by promoting retroviral GAG proteins ubiquitination, redistribution to endo-lysosomal compartments and, ultimately, lysosomal degradation. Catalyzes distinct types of ubiquitination on MAVS and STING1 at different phases of viral infection to promote innate antiviral response. Mediates the 'Lys-48'-linked ubiquitination of MAVS leading to its proteasomal degradation and ubiquitinates STING1 via 'Lys-63'-linked polyubiquitination, critical for its oligomerization and the subsequent recruitment of TBK1. Plays a positive role in the autophagosome-lysosome fusion by interacting with STX17 and enhancing its stability without affecting 'Lys-48'- or 'Lys-63'-linked polyubiquitination levels, which in turn promotes autophagosome maturation. Negatively regulates TLR-induced expression of proinflammatory cytokines by catalyzing 'Lys-11'-linked ubiquitination of RAB1A and RAB13 to inhibit post-ER trafficking of TLRs to the Golgi by RAB1A and subsequently from the Golgi apparatus to the cell surface by RAB13. The polypeptide is E3 ubiquitin-protein ligase RNF115 (Homo sapiens (Human)).